Reading from the N-terminus, the 316-residue chain is MPDIKLFAGNATPELAKRISERLYISLGNATVGRFSDGEIQVQINENVRGSDVFIIQSTCAPTNDNLMELIVMVDALRRASAGRITAVIPYFGYSRQDRRVRSARVPITAKVVADFLSSVGVDRVLTCDLHAEQIQGFFDVPVDNVFGSPVLIDDILKKKDLVNPIVVSPDIGGVVRARAVAKLLNDTDMAIIDKRRPKANVSQVMHIIGDVTDRDCILVDDMIDTGGTLVKAAEALKERGARRVFAYATHAVFSGSAANNLANPALDEVVVTDTIPLSDEIEALNKVRVLTLSSMLAEAIRRISNEESISAMFDA.

ATP is bound by residues 37–39 and 96–97; these read DGE and RQ. Residues H131 and D171 each contribute to the Mg(2+) site. The active site involves K195. D-ribose 5-phosphate contacts are provided by residues R197, D221, and 225–229; that span reads DTGGT.

Belongs to the ribose-phosphate pyrophosphokinase family. Class I subfamily. As to quaternary structure, homohexamer. The cofactor is Mg(2+).

The protein localises to the cytoplasm. The enzyme catalyses D-ribose 5-phosphate + ATP = 5-phospho-alpha-D-ribose 1-diphosphate + AMP + H(+). It functions in the pathway metabolic intermediate biosynthesis; 5-phospho-alpha-D-ribose 1-diphosphate biosynthesis; 5-phospho-alpha-D-ribose 1-diphosphate from D-ribose 5-phosphate (route I): step 1/1. Functionally, involved in the biosynthesis of the central metabolite phospho-alpha-D-ribosyl-1-pyrophosphate (PRPP) via the transfer of pyrophosphoryl group from ATP to 1-hydroxyl of ribose-5-phosphate (Rib-5-P). This Haemophilus ducreyi (strain 35000HP / ATCC 700724) protein is Ribose-phosphate pyrophosphokinase.